Here is a 172-residue protein sequence, read N- to C-terminus: Galectin-related protein (172 aa).

Residue A2 is modified to N-acetylalanine. Phosphoserine is present on residues S22 and S25. One can recognise a Galectin domain in the interval 39 to 168 (PFCGHIKGGM…TIKINGDLQI (130 aa)).

As to quaternary structure, monomer.

Its function is as follows. Does not bind lactose, and may not bind carbohydrates. The polypeptide is Galectin-related protein (LGALSL) (Homo sapiens (Human)).